Reading from the N-terminus, the 178-residue chain is Cytochrome b6-f complex iron-sulfur subunit (178 aa).

A helical membrane pass occupies residues Leu20–Ile42. The region spanning Trp68–Val161 is the Rieske domain. [2Fe-2S] cluster is bound by residues Cys107, His109, Cys125, and His128. An intrachain disulfide couples Cys112 to Cys127.

It belongs to the Rieske iron-sulfur protein family. The 4 large subunits of the cytochrome b6-f complex are cytochrome b6, subunit IV (17 kDa polypeptide, PetD), cytochrome f and the Rieske protein, while the 4 small subunits are PetG, PetL, PetM and PetN. The complex functions as a dimer. [2Fe-2S] cluster serves as cofactor.

Its subcellular location is the cellular thylakoid membrane. It carries out the reaction 2 oxidized [plastocyanin] + a plastoquinol + 2 H(+)(in) = 2 reduced [plastocyanin] + a plastoquinone + 4 H(+)(out). In terms of biological role, component of the cytochrome b6-f complex, which mediates electron transfer between photosystem II (PSII) and photosystem I (PSI), cyclic electron flow around PSI, and state transitions. The chain is Cytochrome b6-f complex iron-sulfur subunit from Prochlorococcus marinus (strain MIT 9303).